The following is a 152-amino-acid chain: Transcriptional repressor NrdR (152 aa).

A zinc finger lies at Cys3–Cys34. Residues Leu49–Ala139 enclose the ATP-cone domain.

The protein belongs to the NrdR family. The cofactor is Zn(2+).

Functionally, negatively regulates transcription of bacterial ribonucleotide reductase nrd genes and operons by binding to NrdR-boxes. The chain is Transcriptional repressor NrdR from Limosilactobacillus fermentum (strain NBRC 3956 / LMG 18251) (Lactobacillus fermentum).